Consider the following 143-residue polypeptide: Transcription antitermination protein NusB (143 aa).

The protein belongs to the NusB family.

In terms of biological role, involved in transcription antitermination. Required for transcription of ribosomal RNA (rRNA) genes. Binds specifically to the boxA antiterminator sequence of the ribosomal RNA (rrn) operons. This is Transcription antitermination protein NusB from Desulfatibacillum aliphaticivorans.